Consider the following 249-residue polypeptide: 2,3-bisphosphoglycerate-dependent phosphoglycerate mutase (249 aa).

Residues 8-15 (RHGESTWN), 21-22 (TG), Arg60, 87-90 (ERHY), Lys98, 114-115 (RR), and 183-184 (GN) each bind substrate. His9 serves as the catalytic Tele-phosphohistidine intermediate. The Proton donor/acceptor role is filled by Glu87.

It belongs to the phosphoglycerate mutase family. BPG-dependent PGAM subfamily. As to quaternary structure, homodimer.

It carries out the reaction (2R)-2-phosphoglycerate = (2R)-3-phosphoglycerate. It functions in the pathway carbohydrate degradation; glycolysis; pyruvate from D-glyceraldehyde 3-phosphate: step 3/5. In terms of biological role, catalyzes the interconversion of 2-phosphoglycerate and 3-phosphoglycerate. This chain is 2,3-bisphosphoglycerate-dependent phosphoglycerate mutase, found in Azoarcus sp. (strain BH72).